A 391-amino-acid chain; its full sequence is MKFTLISSCVTLALMTLSIEAAPSGKKVNIPLTKNKDYKPNAKNAIQKAIAKYHRHRSVSSSNSTSTDGIGYVPVTDYYNDIEYYGEVTVGTPGVTLKLDFDTGSSDLWFASSLCTNCGSSQTKYNPNESSTYARDGRTWSISYGDGSSASGILGTDTVILGGLTIRHQTIELARREASQFQSGPSDGLLGLGFDSITTVRGVKTPVDNLISQGLISNPVFGVYLGKESNGGGGEYIFGGYDSSKFKGSLTTIPVDNSNGWYGITVRGTSIGGSRVSSSFDAILDTGTSLLVLPNDVASSVAEAYGASDNYDGTFSISCDTSSFEPLVFTIGSSTFEVPADSLVYEQDGYSCIAGFGYGDYDFAIFGDVFLKNNYVVFNPEVPHVQIAPIA.

A signal peptide spans 1 to 21 (MKFTLISSCVTLALMTLSIEA). Positions 22–68 (APSGKKVNIPLTKNKDYKPNAKNAIQKAIAKYHRHRSVSSSNSTSTD) are cleaved as a propeptide — activation peptide. The Peptidase A1 domain maps to 84-388 (YYGEVTVGTP…NPEVPHVQIA (305 aa)). D102 is an active-site residue. A disulfide bridge links C115 with C118. D285 is a catalytic residue. C319 and C352 are joined by a disulfide.

The protein belongs to the peptidase A1 family.

It carries out the reaction Hydrolysis of proteins with broad specificity similar to that of pepsin A, preferring hydrophobic residues at P1 and P1'. Clots milk and activates trypsinogen. Does not cleave 4-Gln-|-His-5, but does cleave 10-His-|-Leu-11 and 12-Val-|-Glu-13 in B chain of insulin.. The polypeptide is Rhizopuspepsin-3 (Rhizopus niveus).